The primary structure comprises 520 residues: Fusaridione A cluster transcription factor fsdR (520 aa).

The disordered stretch occupies residues 1–30; it reads MSTGPPSGISLVSMTTPRKSGQHTPESWSK.

It is found in the nucleus. In terms of biological role, transcription factor that regulates the expression of the gene cluster that mediates the biosynthesis of fusaridione A. The sequence is that of Fusaridione A cluster transcription factor fsdR from Fusarium heterosporum.